Consider the following 380-residue polypeptide: Serpin B7 (380 aa).

Ser217 carries the post-translational modification Phosphoserine.

This sequence belongs to the serpin family. Ov-serpin subfamily.

It localises to the cytoplasm. In terms of biological role, might function as an inhibitor of Lys-specific proteases. Might influence the maturation of megakaryocytes via its action as a serpin. The polypeptide is Serpin B7 (Serpinb7) (Mus musculus (Mouse)).